Consider the following 228-residue polypeptide: uncharacterized protein (228 aa).

Transmembrane regions (helical) follow at residues 14–34 (GWYIRGALIANVIIMGFMWLI), 53–73 (FLIIGTFVRAVFIVFGAVLIV), 108–128 (GLTFITILLSNILIAAGFFWL), 148–168 (AVKMAVFAFGAAGTSLVPIFF), 178–198 (TIISSVVIVMLISSTSPGFSI), and 200–220 (SVVYIPLSLAAFGLFFSYMAI).

Its subcellular location is the cell membrane. This is an uncharacterized protein from Bacillus subtilis (strain 168).